The primary structure comprises 560 residues: DNA ligase B (560 aa).

Lysine 124 serves as the catalytic N6-AMP-lysine intermediate.

Belongs to the NAD-dependent DNA ligase family. LigB subfamily.

It carries out the reaction NAD(+) + (deoxyribonucleotide)n-3'-hydroxyl + 5'-phospho-(deoxyribonucleotide)m = (deoxyribonucleotide)n+m + AMP + beta-nicotinamide D-nucleotide.. Functionally, catalyzes the formation of phosphodiester linkages between 5'-phosphoryl and 3'-hydroxyl groups in double-stranded DNA using NAD as a coenzyme and as the energy source for the reaction. This chain is DNA ligase B, found in Citrobacter koseri (strain ATCC BAA-895 / CDC 4225-83 / SGSC4696).